The following is a 281-amino-acid chain: MTQKIIRVGNIEIANDKPFVLFGGMNVLESRDLAMKVCEEYVRVTEKLGIPYVFKASFDKANRSSVTSYRGPGMEEGLKIFEEIKRTFNVPVITDVHEPYQAEPVAKVCDIIQLPAFLSRQTDLVVAMAKTGVVINIKKAQFLAPQEMKHILAKCEEAGNDQLILCERGSSFGYNNLVVDMLGFGIMKQFEYPVFFDVTHALQMPGGRADSAGGRRAQVTDLAKAGMSQGLAGLFLEAHPDPDNAKCDGPCALRLDKLEPFLVQLKQLDDLVKSFPTVETA.

This sequence belongs to the KdsA family.

The protein localises to the cytoplasm. It carries out the reaction D-arabinose 5-phosphate + phosphoenolpyruvate + H2O = 3-deoxy-alpha-D-manno-2-octulosonate-8-phosphate + phosphate. It functions in the pathway carbohydrate biosynthesis; 3-deoxy-D-manno-octulosonate biosynthesis; 3-deoxy-D-manno-octulosonate from D-ribulose 5-phosphate: step 2/3. The protein operates within bacterial outer membrane biogenesis; lipopolysaccharide biosynthesis. The chain is 2-dehydro-3-deoxyphosphooctonate aldolase 1 (kdsA1) from Pseudomonas putida (strain ATCC 47054 / DSM 6125 / CFBP 8728 / NCIMB 11950 / KT2440).